The sequence spans 570 residues: Sulfite reductase [NADPH] hemoprotein beta-component (570 aa).

Positions 434, 440, 479, and 483 each coordinate [4Fe-4S] cluster. Cys-483 contributes to the siroheme binding site.

It belongs to the nitrite and sulfite reductase 4Fe-4S domain family. In terms of assembly, alpha(8)-beta(8). The alpha component is a flavoprotein, the beta component is a hemoprotein. Siroheme serves as cofactor. The cofactor is [4Fe-4S] cluster.

The catalysed reaction is hydrogen sulfide + 3 NADP(+) + 3 H2O = sulfite + 3 NADPH + 4 H(+). The protein operates within sulfur metabolism; hydrogen sulfide biosynthesis; hydrogen sulfide from sulfite (NADPH route): step 1/1. Functionally, component of the sulfite reductase complex that catalyzes the 6-electron reduction of sulfite to sulfide. This is one of several activities required for the biosynthesis of L-cysteine from sulfate. In Escherichia fergusonii (strain ATCC 35469 / DSM 13698 / CCUG 18766 / IAM 14443 / JCM 21226 / LMG 7866 / NBRC 102419 / NCTC 12128 / CDC 0568-73), this protein is Sulfite reductase [NADPH] hemoprotein beta-component.